The chain runs to 117 residues: Large ribosomal subunit protein bL17 (117 aa).

This sequence belongs to the bacterial ribosomal protein bL17 family. Part of the 50S ribosomal subunit. Contacts protein L32.

This is Large ribosomal subunit protein bL17 from Coprothermobacter proteolyticus (strain ATCC 35245 / DSM 5265 / OCM 4 / BT).